The following is a 485-amino-acid chain: UDP-N-acetylmuramate--L-alanine ligase (485 aa).

Residue 120–126 (GSHGKTT) participates in ATP binding.

It belongs to the MurCDEF family.

It localises to the cytoplasm. It catalyses the reaction UDP-N-acetyl-alpha-D-muramate + L-alanine + ATP = UDP-N-acetyl-alpha-D-muramoyl-L-alanine + ADP + phosphate + H(+). It functions in the pathway cell wall biogenesis; peptidoglycan biosynthesis. Its function is as follows. Cell wall formation. The protein is UDP-N-acetylmuramate--L-alanine ligase of Rickettsia peacockii (strain Rustic).